Reading from the N-terminus, the 126-residue chain is MADRKCLALIAHDQKKDDLAAFAKANEAVLSKWKIVATGTTGGRVLDVCPALDIVRLKSGPLGGDQQIGALIATGDVDCLIFFVDPLTAMPHDVDVKALMRLAIVYDIPMALNRATAEQLIDFRRN.

An MGS-like domain is found at 1–126 (MADRKCLALI…AEQLIDFRRN (126 aa)). Substrate is bound by residues His12, Lys16, 38–41 (TGTT), and 59–60 (SG). The active-site Proton donor/acceptor is Asp65. His92 contacts substrate.

This sequence belongs to the methylglyoxal synthase family.

The catalysed reaction is dihydroxyacetone phosphate = methylglyoxal + phosphate. Its function is as follows. Catalyzes the formation of methylglyoxal from dihydroxyacetone phosphate. The chain is Methylglyoxal synthase from Rhizobium meliloti (strain 1021) (Ensifer meliloti).